We begin with the raw amino-acid sequence, 1585 residues long: Adhesion G protein-coupled receptor B2 (1585 aa).

Residues 1 to 32 form the signal peptide; the sequence is MENTGWMGKGHRMTPACPLLLSVILSLRLATA. Residues 33-936 are Extracellular-facing; sequence FDPAPSACSA…ELAGSPSVPL (904 aa). N-linked (GlcNAc...) asparagine glycans are attached at residues N106, N191, and N192. Positions 229–238 are enriched in low complexity; that stretch reads AGAGSTTTTS. Positions 229 to 271 are disordered; sequence AGAGSTTTTSPGPPAAHTLSNALVPGGPAPPAEADLHSGSSND. S266 is a glycosylation site (O-linked (Xyl...) (chondroitin sulfate) serine). TSP type-1 domains lie at 309–362, 364–417, 419–472, and 475–528; these read DPAA…ATCP, HGVW…AACP, EGQW…LECP, and DSKW…KRCP. Disulfide bonds link C321-C355, C325-C361, C336-C345, C376-C411, C380-C416, C391-C401, C431-C466, C435-C471, C446-C456, C487-C522, C491-C527, C502-C512, C534-C569, and C557-C587. N-linked (GlcNAc...) asparagine glycosylation is present at N356. The N-linked (GlcNAc...) asparagine glycan is linked to N437. N-linked (GlcNAc...) asparagine glycosylation is found at N560 and N645. The GAIN-B domain maps to 757 to 924; it reads DRLFLPKEVL…AVLAQPPKDL (168 aa). The segment at 767–806 is disordered; that stretch reads SLSSPGKPATSGAAGSPGRGRGPGTVPPGPGHSHQRLLPA. Over residues 769 to 780 the composition is skewed to low complexity; sequence SSPGKPATSGAA. N867 carries N-linked (GlcNAc...) asparagine glycosylation. 2 disulfides stabilise this stretch: C874-C906 and C894-C908. The segment at 874-924 is GPS; the sequence is CASWDYSRADASSGDWDTENCQTLETQAAHTRCQCQHLSTFAVLAQPPKDL. The helical transmembrane segment at 937–957 threads the bilayer; sequence VIGCAVSCMALLTLLAIYAAF. Residues 958–965 are Cytoplasmic-facing; it reads WRFIKSER. The helical transmembrane segment at 966-986 threads the bilayer; that stretch reads SIILLNFCLSILASNILILVG. Over 987 to 994 the chain is Extracellular; the sequence is QSRVLSKG. The chain crosses the membrane as a helical span at residues 995–1015; that stretch reads VCTMTAAFLHFFFLSSFCWVL. At 1016–1036 the chain is on the cytoplasmic side; the sequence is TEAWQSYLAVIGRMRTRLVRK. The helical transmembrane segment at 1037–1057 threads the bilayer; the sequence is RFLCLGWGLPALVVAVSVGFT. Residues 1058 to 1078 are Extracellular-facing; the sequence is RTKGYGTSSYCWLSLEGGLLY. The chain crosses the membrane as a helical span at residues 1079-1099; sequence AFVGPAAVIVLVNMLIGIIVF. Residues 1100–1121 lie on the Cytoplasmic side of the membrane; the sequence is NKLMARDGISDKSKKQRAGSER. The chain crosses the membrane as a helical span at residues 1122–1142; the sequence is CPWASLLLPCSACGAVPSPLL. The Extracellular portion of the chain corresponds to 1143-1153; that stretch reads SSASARNAMAS. The chain crosses the membrane as a helical span at residues 1154–1174; it reads LWSSCVVLPLLALTWMSAVLA. The Cytoplasmic segment spans residues 1175-1585; it reads MTDRRSVLFQ…PPDGDFQTEV (411 aa). Y1351 carries the post-translational modification Phosphotyrosine. 3 disordered regions span residues 1359 to 1385, 1423 to 1454, and 1498 to 1585; these read LSLQ…PRRA, FQPP…GSTM, and YRSQ…QTEV. Basic and acidic residues predominate over residues 1372–1382; it reads DAPRARPEGTP. Over residues 1543–1552 the composition is skewed to polar residues; it reads SWSTFKSMTL. The span at 1575–1585 shows a compositional bias: acidic residues; it reads EPPDGDFQTEV.

Belongs to the G-protein coupled receptor 2 family. Adhesion G-protein coupled receptor (ADGR) subfamily. Heterodimer of 2 chains generated by proteolytic processing; the large extracellular N-terminal fragment and the membrane-bound C-terminal fragment predominantly remain associated and non-covalently linked. Interacts with GABPB2. Interacts (via carboxy-terminus) with TAX1BP3. Interacts with GNAZ. Interacts with SH3GL2. Post-translationally, glycosylated. In terms of processing, autoproteolytically processed at the GPS region of the GAIN-B domain; this cleavage modulates receptor activity. Additionally, furin is involved in the cleavage at another site, in the middle of the extracellular domain, generating a soluble fragment. As to expression, detected in cerebrospinal fluid (at protein level). Strongly expressed in brain. Also detected in heart, thymus, skeletal muscle, and different cell lines.

The protein resides in the cell membrane. It is found in the secreted. Its activity is regulated as follows. Receptor activity is regulated by proteolytic processing. The long N-terminal has a an inhibitory effect on the constitutive signaling activity. Removal of the N-terminal region induces an increase of the receptor activity. Functionally, orphan G-protein coupled receptor involved in cell adhesion and probably in cell-cell interactions. Activates NFAT-signaling pathway, a transcription factor, via the G-protein GNAZ. Involved in angiogenesis inhibition. In Homo sapiens (Human), this protein is Adhesion G protein-coupled receptor B2.